The sequence spans 383 residues: Phospho-N-acetylmuramoyl-pentapeptide-transferase (383 aa).

A run of 9 helical transmembrane segments spans residues T26 to E46, T73 to L93, I98 to L118, I131 to F151, I182 to A202, G221 to S241, A258 to F278, A283 to F305, and Q360 to L380.

Belongs to the glycosyltransferase 4 family. MraY subfamily. Mg(2+) is required as a cofactor.

Its subcellular location is the cell inner membrane. It catalyses the reaction UDP-N-acetyl-alpha-D-muramoyl-L-alanyl-gamma-D-glutamyl-meso-2,6-diaminopimeloyl-D-alanyl-D-alanine + di-trans,octa-cis-undecaprenyl phosphate = di-trans,octa-cis-undecaprenyl diphospho-N-acetyl-alpha-D-muramoyl-L-alanyl-D-glutamyl-meso-2,6-diaminopimeloyl-D-alanyl-D-alanine + UMP. Its pathway is cell wall biogenesis; peptidoglycan biosynthesis. Its function is as follows. Catalyzes the initial step of the lipid cycle reactions in the biosynthesis of the cell wall peptidoglycan: transfers peptidoglycan precursor phospho-MurNAc-pentapeptide from UDP-MurNAc-pentapeptide onto the lipid carrier undecaprenyl phosphate, yielding undecaprenyl-pyrophosphoryl-MurNAc-pentapeptide, known as lipid I. The protein is Phospho-N-acetylmuramoyl-pentapeptide-transferase of Brachyspira hyodysenteriae (strain ATCC 49526 / WA1).